We begin with the raw amino-acid sequence, 188 residues long: Peptidyl-tRNA hydrolase (188 aa).

A tRNA-binding site is contributed by tyrosine 15. Catalysis depends on histidine 20, which acts as the Proton acceptor. Residues phenylalanine 66, asparagine 68, and asparagine 114 each coordinate tRNA.

This sequence belongs to the PTH family. In terms of assembly, monomer.

Its subcellular location is the cytoplasm. It catalyses the reaction an N-acyl-L-alpha-aminoacyl-tRNA + H2O = an N-acyl-L-amino acid + a tRNA + H(+). Its function is as follows. Hydrolyzes ribosome-free peptidyl-tRNAs (with 1 or more amino acids incorporated), which drop off the ribosome during protein synthesis, or as a result of ribosome stalling. In terms of biological role, catalyzes the release of premature peptidyl moieties from peptidyl-tRNA molecules trapped in stalled 50S ribosomal subunits, and thus maintains levels of free tRNAs and 50S ribosomes. In Lactococcus lactis subsp. cremoris (strain MG1363), this protein is Peptidyl-tRNA hydrolase.